A 175-amino-acid chain; its full sequence is Granulocyte colony-stimulating factor (175 aa).

2 cysteine pairs are disulfide-bonded: C37–C43 and C65–C75. An O-linked (GalNAc...) threonine glycan is attached at T134.

This sequence belongs to the IL-6 superfamily. Monomer. In terms of processing, O-glycosylated.

It is found in the secreted. Its function is as follows. Granulocyte/macrophage colony-stimulating factors are cytokines that act in hematopoiesis by controlling the production, differentiation, and function of 2 related white cell populations of the blood, the granulocytes and the monocytes-macrophages. This CSF induces granulocytes. This Canis lupus familiaris (Dog) protein is Granulocyte colony-stimulating factor (CSF3).